Consider the following 84-residue polypeptide: MKVALIVCLVWVMAMMELVSCECWSQADCSDGHCCAGSSFSKNCRPYGGDGEQCEPRNKYEVYSTGCPCEENLMCSVINRCQSA.

A signal peptide spans 1-21 (MKVALIVCLVWVMAMMELVSC). 5 disulfides stabilise this stretch: Cys-23–Cys-35, Cys-29–Cys-44, Cys-34–Cys-67, Cys-54–Cys-75, and Cys-69–Cys-81.

This sequence belongs to the AVIT (prokineticin) family. Expressed by the venom gland.

It localises to the secreted. The chain is U8-theraphotoxin-Hhn1c 3 from Cyriopagopus hainanus (Chinese bird spider).